The primary structure comprises 125 residues: Aldolase FrzH (125 aa).

The enzyme catalyses (2S)-3-(4-methoxyphenyl)-2-[(3S)-3-(methylamino)-8-oxo-1-azaspiro[4.5]decan-1-yl]propanal = (1S,3S,6S,7S,8R)-7-hydroxy-6-[(4-methoxyphenyl)methyl]-3-(methylamino)-5-azatricyclo[6.3.1.0(1,5)]dodecan-9-one. It functions in the pathway secondary metabolite biosynthesis. Aldolase; part of the gene cluster that mediates the biosynthesis of the alkaloid (-)-FR901483, a potent immunosuppressant that shows efficacy in animal models and a probable inhibitor of purine nucleotide biosynthesis by targeting phosphoribosylpyrophosphate amidotransferase (PPAT). Within the pathway, FrzH is a new kind of aldolase with no similarities to known aldolases, and which catalyzes the intramolecular aldol condensation via formation of a C9-C3' bond to yield an aza-tricyclic product. The biosynthesis of (-)-FR901483 starts with the condensation of two L-tyrosines to yield (S,S)-dityrosyl-piperazine. This process occurs in 3 steps with the non-canonical nonribosomal peptide synthetase FrzA catalyzing the reduction of L-tyrosine into L-tyrosinal, the spontaneous condensation of 2 L-tyrosinal units, and the subsequent reduction by the NmrA-like family domain-containing oxidoreductase FrzB. The cytochrome P450 monooxygenase FrzC then performs coupling between N10 and C1' to morph the piperazine into a 1,4-diazabicyclo[3.2.1]octane spiro-fused to a 2,5-cyclohexadienone. The dienone portion is further reduced to cyclohexanone by the flavin-dependent reductase FrzD. The methyltranserases (MTs) FrzE and FrzF are then involved in the methylation at the C10' amine and the C4 phenolic oxygen, respectively. The order of the two MTs appear to be interchangeable. Cleavage of the C9-N10' bond by the dioxygenase FrzG then leads to formation of a conjugated iminium. In addition to the oxidation of C9, an additional dehydrogenation between C7 and C8 can occur to give a likely shunt product. The next biosynthetic step is the intramolecular aldol condensation catalyzed by the newly identified aldolase FrzH to yield an aza-tricyclic product with the formation of a C9-C3' bond. The short-chain dehydrogenase/reductase FrzI then produces dephospho-(-)-FR901483 that is phosphorylated at C4'-OH into (-)-FR901483 by the phosphotransferase FrzJ. This Cladobotryum sp protein is Aldolase FrzH.